We begin with the raw amino-acid sequence, 506 residues long: MVSSTTPSSGEYLLEMSGINKSFPGVKALDNVNLKVRPHSIHALMGENGAGKSTLLKCLFGIYQKDSGTILFQGKEIDFHSAKEALENGISMVHQELNLVLQRSVMDNMWLRRYPTKGMFVDQDKMYRETKAIFDELDIDIDPRARVGTLSVSQMQMIEIAKAFSYNAKIVIMDEPTSSLTEKEVNHLFTIIRKLKERGCGIVYISHKMEEIFQLCDEVTVLRDGQWIATEPLAGLTMDKIIAMMVGRSLNQRFPDKENKPGEVILEVRNLTSLRQPSIRDVSFDLHKGEILGIAGLVGAKRTDIVETLFGIREKSAGTITLHGKQINNHNANEAINHGFALVTEERRSTGIYAYLDIGFNSLISNIRNYKNKVGLLDKSRMKSDTQWVIDSMRVKTPGHRTQIGSLSGGNQQKVIIGRWLLTQPEILMLDEPTRGIDVGAKFEIYQLIAELAKKGKGIIIISSEMPELLGITDRILVMSNGLVSGIVDTKTTTQNEILRLASLHL.

2 consecutive ABC transporter domains span residues 14–249 and 264–506; these read LEMS…VGRS and VILE…SLHL. 46-53 is a binding site for ATP; it reads GENGAGKS.

The protein belongs to the ABC transporter superfamily. Galactose/methyl galactoside importer (TC 3.A.1.2.3) family. As to quaternary structure, the complex is composed of one ATP-binding protein (MglA), two transmembrane proteins (MglC) and a solute-binding protein (MglB).

The protein localises to the cell inner membrane. It carries out the reaction D-galactose(out) + ATP + H2O = D-galactose(in) + ADP + phosphate + H(+). It catalyses the reaction methyl beta-D-galactoside(out) + ATP + H2O = methyl beta-D-galactoside(in) + ADP + phosphate + H(+). Its function is as follows. Part of the ABC transporter complex MglABC involved in galactose/methyl galactoside import. Responsible for energy coupling to the transport system. The sequence is that of Galactose/methyl galactoside import ATP-binding protein MglA from Shigella boydii serotype 4 (strain Sb227).